Reading from the N-terminus, the 581-residue chain is Dehydrocurvularin exporter (581 aa).

Residues Met1 to Asn10 are compositionally biased toward polar residues. The interval Met1–Gly47 is disordered. The N-linked (GlcNAc...) asparagine glycan is linked to Asn11. Positions Ser24–Asp39 are enriched in basic and acidic residues. 14 helical membrane passes run Leu61–Ala81, Asp96–Gly116, Trp126–Pro146, Gly159–Pro179, Leu184–Gly204, Trp215–Leu235, Ile251–Thr271, Val288–Leu308, Ile330–Phe350, Val363–Ile383, Tyr392–Val412, Val424–Phe444, Ile456–Phe476, and Val527–Phe547. The tract at residues Asp552–Val581 is disordered. Positions Asp565–Val581 are enriched in basic and acidic residues.

The protein belongs to the major facilitator superfamily. TCR/Tet family.

Its subcellular location is the cell membrane. In terms of biological role, efflux pump that is probably involved in the export of dehydrocurvularin. The protein is Dehydrocurvularin exporter of Alternaria cinerariae.